The primary structure comprises 223 residues: Ribose-5-phosphate isomerase A (223 aa).

Residues 32-35, 85-88, and 98-101 contribute to the substrate site; these read TGST, DGAD, and KGGG. Glu-107 serves as the catalytic Proton acceptor. Lys-125 contacts substrate.

It belongs to the ribose 5-phosphate isomerase family. Homodimer.

It carries out the reaction aldehydo-D-ribose 5-phosphate = D-ribulose 5-phosphate. Its pathway is carbohydrate degradation; pentose phosphate pathway; D-ribose 5-phosphate from D-ribulose 5-phosphate (non-oxidative stage): step 1/1. Functionally, catalyzes the reversible conversion of ribose-5-phosphate to ribulose 5-phosphate. The polypeptide is Ribose-5-phosphate isomerase A (Marinomonas sp. (strain MWYL1)).